We begin with the raw amino-acid sequence, 29 residues long: Cytochrome c oxidase subunit 7A1, mitochondrial (29 aa).

Over residues 1-13 (LENRVAEKQKLFQ) the composition is skewed to basic and acidic residues. Residues 1–29 (LENRVAEKQKLFQEDNGLPVHLKGGATDN) form a disordered region.

It belongs to the cytochrome c oxidase VIIa family. In terms of assembly, component of the complex IV (CIV, cytochrome c oxidase), a multisubunit enzyme composed of 14 subunits. The complex is composed of a catalytic core of 3 subunits MT-CO1, MT-CO2 and MT-CO3, encoded in the mitochondrial DNA, and 11 supernumerary subunits COX4I1 (or COX4I2), COX5A, COX5B, COX6A2 (or COX6A1), COX6B1 (or COX6B2), COX6C, COX7A1 (or COX7A2), COX7B, COX7C, COX8B and NDUFA4, which are encoded in the nuclear genome. The complex exists as a monomer or a dimer and forms supercomplexes (SCs) in the inner mitochondrial membrane with NADH-ubiquinone oxidoreductase (complex I, CI) and ubiquinol-cytochrome c oxidoreductase (cytochrome b-c1 complex, complex III, CIII), resulting in different assemblies (supercomplex SCI(1)III(2)IV(1) and megacomplex MCI(2)III(2)IV(2)).

It is found in the mitochondrion inner membrane. Its pathway is energy metabolism; oxidative phosphorylation. Functionally, component of the mitochondrial respiratory complex IV (CIV, also named cytochrome c oxidase complex), the last enzyme in the mitochondrial electron transport chain which drives oxidative phosphorylation. The CIV complex is the component of the respiratory chain that catalyzes the reduction of oxygen to water. Acts as an assembly factor that specifically drives the homodimerization of CIV complexes, mediating the formation of mitochondrial respiratory supercomplexes (respirasomes) containing two CIV: supercomplxes with two molecules of CIV show improved activity. Despite being highly expressed in brown adipose tissue, not required for thermogenesis. In Ovis aries (Sheep), this protein is Cytochrome c oxidase subunit 7A1, mitochondrial (COX7A1).